A 282-amino-acid chain; its full sequence is ATP synthase gamma chain (282 aa).

Belongs to the ATPase gamma chain family. As to quaternary structure, F-type ATPases have 2 components, CF(1) - the catalytic core - and CF(0) - the membrane proton channel. CF(1) has five subunits: alpha(3), beta(3), gamma(1), delta(1), epsilon(1). CF(0) has three main subunits: a, b and c.

Its subcellular location is the cell membrane. Functionally, produces ATP from ADP in the presence of a proton gradient across the membrane. The gamma chain is believed to be important in regulating ATPase activity and the flow of protons through the CF(0) complex. This is ATP synthase gamma chain from Clostridium botulinum (strain Okra / Type B1).